The following is a 734-amino-acid chain: Photosystem I P700 chlorophyll a apoprotein A2 (734 aa).

8 consecutive transmembrane segments (helical) span residues 46–69 (IFAS…FHVA), 135–158 (LYTG…LHLQ), 175–199 (LNHH…HVAI), 273–291 (MAHH…GHMY), 330–353 (LHFQ…QHMY), 369–395 (AALY…IFFI), 417–439 (AIIS…LYVH), and 517–535 (FLVH…LILV). [4Fe-4S] cluster-binding residues include Cys-559 and Cys-568. The next 2 membrane-spanning stretches (helical) occupy residues 575-596 (AFYL…YWHW) and 643-665 (LSVW…MFLI). Positions 654, 662, and 670 each coordinate chlorophyll a. A phylloquinone-binding site is contributed by Trp-671. A helical membrane pass occupies residues 707–727 (LVGLAHFSVGYIFTYAAFLIA).

The protein belongs to the PsaA/PsaB family. As to quaternary structure, the PsaA/B heterodimer binds the P700 chlorophyll special pair and subsequent electron acceptors. PSI consists of a core antenna complex that captures photons, and an electron transfer chain that converts photonic excitation into a charge separation. The eukaryotic PSI reaction center is composed of at least 11 subunits. Requires P700 is a chlorophyll a/chlorophyll a' dimer, A0 is one or more chlorophyll a, A1 is one or both phylloquinones and FX is a shared 4Fe-4S iron-sulfur center. as cofactor.

The protein resides in the plastid. Its subcellular location is the chloroplast thylakoid membrane. It catalyses the reaction reduced [plastocyanin] + hnu + oxidized [2Fe-2S]-[ferredoxin] = oxidized [plastocyanin] + reduced [2Fe-2S]-[ferredoxin]. Its function is as follows. PsaA and PsaB bind P700, the primary electron donor of photosystem I (PSI), as well as the electron acceptors A0, A1 and FX. PSI is a plastocyanin-ferredoxin oxidoreductase, converting photonic excitation into a charge separation, which transfers an electron from the donor P700 chlorophyll pair to the spectroscopically characterized acceptors A0, A1, FX, FA and FB in turn. Oxidized P700 is reduced on the lumenal side of the thylakoid membrane by plastocyanin. This is Photosystem I P700 chlorophyll a apoprotein A2 from Daucus carota (Wild carrot).